Reading from the N-terminus, the 276-residue chain is Formamidopyrimidine-DNA glycosylase (276 aa).

Catalysis depends on Pro2, which acts as the Schiff-base intermediate with DNA. Glu3 serves as the catalytic Proton donor. Lys60 (proton donor; for beta-elimination activity) is an active-site residue. DNA contacts are provided by His93 and Arg112. Residues 240-274 (NVYGKKGEPCVTCGTILEKTVVGGRGTHYCPICQP) form an FPG-type zinc finger. Residue Arg264 is the Proton donor; for delta-elimination activity of the active site.

Belongs to the FPG family. In terms of assembly, monomer. It depends on Zn(2+) as a cofactor.

It catalyses the reaction Hydrolysis of DNA containing ring-opened 7-methylguanine residues, releasing 2,6-diamino-4-hydroxy-5-(N-methyl)formamidopyrimidine.. The catalysed reaction is 2'-deoxyribonucleotide-(2'-deoxyribose 5'-phosphate)-2'-deoxyribonucleotide-DNA = a 3'-end 2'-deoxyribonucleotide-(2,3-dehydro-2,3-deoxyribose 5'-phosphate)-DNA + a 5'-end 5'-phospho-2'-deoxyribonucleoside-DNA + H(+). Involved in base excision repair of DNA damaged by oxidation or by mutagenic agents. Acts as a DNA glycosylase that recognizes and removes damaged bases. Has a preference for oxidized purines, such as 7,8-dihydro-8-oxoguanine (8-oxoG). Has AP (apurinic/apyrimidinic) lyase activity and introduces nicks in the DNA strand. Cleaves the DNA backbone by beta-delta elimination to generate a single-strand break at the site of the removed base with both 3'- and 5'-phosphates. This Bacillus cereus (strain ATCC 10987 / NRS 248) protein is Formamidopyrimidine-DNA glycosylase.